The following is a 365-amino-acid chain: TD and POZ domain-containing protein 3 (365 aa).

Residues 19–149 (KFCYNWTISN…EDQFTICCKV (131 aa)) enclose the MATH domain. Positions 188–250 (TDCCLLVAGH…EMMGFIYTGK (63 aa)) constitute a BTB domain.

Belongs to the Tdpoz family.

The protein is TD and POZ domain-containing protein 3 of Mus musculus (Mouse).